Reading from the N-terminus, the 351-residue chain is Vacuolar protein sorting-associated protein 72 homolog (351 aa).

A disordered region spans residues methionine 1–serine 136. The span at glutamine 36 to glutamate 72 shows a compositional bias: acidic residues. Residues serine 56, serine 59, and serine 68 each carry the phosphoserine modification. The segment covering alanine 87–lysine 100 has biased composition (basic and acidic residues). Basic residues predominate over residues leucine 105 to proline 121. Positions glutamine 142 to serine 202 form a coiled coil. The DNA-binding element occupies lysine 156 to threonine 208.

Belongs to the VPS72/YL1 family. As to quaternary structure, interacts with H2AV. Component of the Tip60 chromatin-remodeling complex which contains the catalytic subunit Tip60 and the subunits Domino, Tra1, Brd8, E(Pc), DMAP1, Pontin, Reptin, Ing3, Act87E, BAP55, Mrg15, MrgBP, Gas41 and YL-1.

The protein localises to the nucleus. Part of the Tip60 chromatin-remodeling complex which is involved in DNA repair. Upon induction of DNA double-strand breaks, this complex acetylates phosphorylated H2AV in nucleosomes and exchanges it with unmodified H2AV. The polypeptide is Vacuolar protein sorting-associated protein 72 homolog (YL-1) (Drosophila melanogaster (Fruit fly)).